A 159-amino-acid polypeptide reads, in one-letter code: Transcription elongation factor GreA (159 aa).

The stretch at 7–72 (MTVRGAEKLR…IQEIESKLSN (66 aa)) forms a coiled coil.

Belongs to the GreA/GreB family.

In terms of biological role, necessary for efficient RNA polymerase transcription elongation past template-encoded arresting sites. The arresting sites in DNA have the property of trapping a certain fraction of elongating RNA polymerases that pass through, resulting in locked ternary complexes. Cleavage of the nascent transcript by cleavage factors such as GreA or GreB allows the resumption of elongation from the new 3'terminus. GreA releases sequences of 2 to 3 nucleotides. The chain is Transcription elongation factor GreA from Buchnera aphidicola subsp. Schizaphis graminum (strain Sg).